A 763-amino-acid chain; its full sequence is Phosphoglycerol transferase I (763 aa).

The next 4 membrane-spanning stretches (helical) occupy residues Met1–Ala21, Trp26–Tyr46, Ile77–Ile97, and Val108–Phe128.

The protein belongs to the OpgB family.

It is found in the cell inner membrane. It carries out the reaction a phosphatidylglycerol + a membrane-derived-oligosaccharide D-glucose = a 1,2-diacyl-sn-glycerol + a membrane-derived-oligosaccharide 6-(glycerophospho)-D-glucose.. The protein operates within glycan metabolism; osmoregulated periplasmic glucan (OPG) biosynthesis. Its function is as follows. Transfers a phosphoglycerol residue from phosphatidylglycerol to the membrane-bound nascent glucan backbones. The chain is Phosphoglycerol transferase I from Salmonella newport (strain SL254).